Consider the following 31-residue polypeptide: Branched-chain-amino-acid aminotransferase, mitochondrial (31 aa).

The transit peptide at 1–27 (MAAAALRQIWARKFLPVPWLLCGPRRY) directs the protein to the mitochondrion.

This sequence belongs to the class-IV pyridoxal-phosphate-dependent aminotransferase family. Homodimer. Requires pyridoxal 5'-phosphate as cofactor.

It localises to the mitochondrion. The catalysed reaction is L-leucine + 2-oxoglutarate = 4-methyl-2-oxopentanoate + L-glutamate. The enzyme catalyses L-isoleucine + 2-oxoglutarate = (S)-3-methyl-2-oxopentanoate + L-glutamate. It catalyses the reaction L-valine + 2-oxoglutarate = 3-methyl-2-oxobutanoate + L-glutamate. Catalyzes the first reaction in the catabolism of the essential branched chain amino acids leucine, isoleucine, and valine. May also function as a transporter of branched chain alpha-keto acids. The polypeptide is Branched-chain-amino-acid aminotransferase, mitochondrial (BCAT2) (Sus scrofa (Pig)).